A 296-amino-acid polypeptide reads, in one-letter code: Vacuolar histidine transporter YPQ3 (296 aa).

The Vacuolar portion of the chain corresponds to 1 to 12 (MKLIPIILNAKN). Residues 10–76 (AKNLSGMAGS…QNLLPTMIIL (67 aa)) form the PQ-loop 1 domain. A helical membrane pass occupies residues 13–33 (LSGMAGSISICCWIVVFVPQI). The Cytoplasmic segment spans residues 34–44 (YENFRRQSAEG). A helical transmembrane segment spans residues 45–65 (LSLLFIVLWLLGDIFNVMGAM). The Vacuolar segment spans residues 66–68 (MQN). Residues 69–89 (LLPTMIILAAYYTLADLILLI) traverse the membrane as a helical segment. At 90 to 163 (QCMWYDKEKK…RTIVVKEREN (74 aa)) the chain is on the cytoplasmic side. The chain crosses the membrane as a helical span at residues 164–184 (FFNDFLIVSGVLIAGILSWYI). At 185 to 199 (SYCSGLDNGIPKKKP) the chain is on the vacuolar side. A helical transmembrane segment spans residues 200–220 (AFEQINLPAQILGYLSAILYL). The 63-residue stretch at 208 to 270 (AQILGYLSAI…ASWLIGSAGT (63 aa)) folds into the PQ-loop 2 domain. Topologically, residues 221-238 (GSRIPQIVLNFKRKSCEG) are cytoplasmic. A helical membrane pass occupies residues 239 to 259 (VSFLFFLFACLGNTSFIISVL). The Vacuolar portion of the chain corresponds to 260 to 262 (SAS). A helical transmembrane segment spans residues 263–283 (WLIGSAGTLLMDFTVFIQFFL). At 284 to 296 (YAKPKYEKILIDN) the chain is on the cytoplasmic side.

The protein belongs to the laat-1 family.

The protein localises to the vacuole membrane. The protein resides in the mitochondrion membrane. Amino acid transporter that moves histidine into the vacuole. May also contribute to low affinity arginine import into the vacuole. May function as an amino acid/proton antiporter. This Saccharomyces cerevisiae (strain ATCC 204508 / S288c) (Baker's yeast) protein is Vacuolar histidine transporter YPQ3.